A 225-amino-acid chain; its full sequence is MSGHDSGNARRGRASFGAFVRKPVERGAAASTGAAAEQGSLEAAQDWPDDAVEVGAVVDAYGLKGWIKVAAHADAGRGGDALLSARRWWLERGAERLSVRILQSKTHGDTVVAQPAGVDDRDAALAMRGFRVFVRREDFPALAADEFYWVDLIGLEVVNEQSVSLGKVSGMIDNGVHSILRVEYPTVGKDGAPATDERLIPFVGVYVKTVDQAARRIVVDWEADY.

In terms of domain architecture, PRC barrel spans 144–225; it reads ADEFYWVDLI…RIVVDWEADY (82 aa).

The protein belongs to the RimM family. As to quaternary structure, binds ribosomal protein uS19.

Its subcellular location is the cytoplasm. Its function is as follows. An accessory protein needed during the final step in the assembly of 30S ribosomal subunit, possibly for assembly of the head region. Essential for efficient processing of 16S rRNA. May be needed both before and after RbfA during the maturation of 16S rRNA. It has affinity for free ribosomal 30S subunits but not for 70S ribosomes. The chain is Ribosome maturation factor RimM from Burkholderia vietnamiensis (strain G4 / LMG 22486) (Burkholderia cepacia (strain R1808)).